A 1220-amino-acid chain; its full sequence is Deubiquitinating protein VCPIP1 (1220 aa).

Over residues 1–19 the composition is skewed to pro residues; the sequence is MSQPPPPPPLPPPPPPPEA. Residues 1-40 form a disordered region; sequence MSQPPPPPPLPPPPPPPEAPQTSSSLAAAASPGGLSKRRD. Positions 20–35 are enriched in low complexity; that stretch reads PQTSSSLAAAASPGGL. Residues 207 to 360 form the OTU domain; it reads LIPVHVDGDG…RNHYIPLVGI (154 aa). D215 is a catalytic residue. C218 functions as the Nucleophile in the catalytic mechanism. H353 is an active-site residue. Position 407 is an N6-acetyllysine (K407). Disordered regions lie at residues 724–778 and 988–1008; these read SVMQ…KIRI and EATT…LGSG. A phosphoserine mark is found at S746 and S756. Residues 754–770 are compositionally biased toward low complexity; it reads PSSAPATPTKAPYSPTT. Position 762 is a phosphothreonine (T762). 4 positions are modified to phosphoserine: S767, S993, S997, and S1076. Disordered stretches follow at residues 1113–1140 and 1185–1220; these read SSIQ…QRKV and FATR…MDHS. Residues S1196 and S1205 each carry the phosphoserine modification. The span at 1197-1207 shows a compositional bias: acidic residues; that stretch reads MEEPEEMDSQD. Positions 1208 to 1220 are enriched in polar residues; it reads AETTNTTEPMDHS.

Binds VCP and the ternary complex containing STX5A, NSFL1C and VCP. Phosphorylated at Ser-1205 by ATM or ATR following induction of covalent DNA-protein cross-links (DPCs).

It localises to the nucleus. The protein localises to the cytoplasm. Its subcellular location is the endoplasmic reticulum. It is found in the golgi apparatus. The protein resides in the golgi stack. It carries out the reaction Thiol-dependent hydrolysis of ester, thioester, amide, peptide and isopeptide bonds formed by the C-terminal Gly of ubiquitin (a 76-residue protein attached to proteins as an intracellular targeting signal).. Functionally, deubiquitinating enzyme involved in DNA repair and reassembly of the Golgi apparatus and the endoplasmic reticulum following mitosis. Necessary for VCP-mediated reassembly of Golgi stacks after mitosis. Plays a role in VCP-mediated formation of transitional endoplasmic reticulum (tER). Mediates dissociation of the ternary complex containing STX5A, NSFL1C and VCP. Also involved in DNA repair following phosphorylation by ATM or ATR: acts by catalyzing deubiquitination of SPRTN, thereby promoting SPRTN recruitment to chromatin and subsequent proteolytic cleavage of covalent DNA-protein cross-links (DPCs). Hydrolyzes 'Lys-11'- and 'Lys-48'-linked polyubiquitin chains. The sequence is that of Deubiquitinating protein VCPIP1 from Mus musculus (Mouse).